The primary structure comprises 893 residues: Exocyst complex component 4 (893 aa).

The interval 1 to 27 (MNENGATPVAAARRHRPLPAERATSNS) is disordered.

It belongs to the SEC8 family. In terms of assembly, the exocyst complex is composed of sec-3/exoc1, sec-5/exoc2, sec-6/exoc3, sec-8/exoc4, sec-10/exoc5, sec-15/exoc6, exo-70/exoc7 and exo-84/exoc8. In terms of tissue distribution, pseudocoelom.

In terms of biological role, component of the exocyst complex involved in the docking of exocytic vesicles with fusion sites on the plasma membrane. The protein is Exocyst complex component 4 (sec-8) of Caenorhabditis elegans.